A 502-amino-acid polypeptide reads, in one-letter code: Reduced meiotic recombination protein C1442.04c (502 aa).

Residues Ser-328, Ser-330, and Ser-331 each carry the phosphoserine modification. Disordered regions lie at residues 353–391 (NDLNNEEPNSVVAEDGSEIITLDENDQSPNEATEKLRDN), 420–440 (GSLNNADLSQEPITNDGENVD), and 454–502 (ESAF…PSDD). Residues 367 to 378 (DGSEIITLDEND) are compositionally biased toward acidic residues. 2 stretches are compositionally biased toward polar residues: residues 420–436 (GSLNNADLSQEPITNDG) and 462–477 (GTINSSKRRLSVTTDT).

This sequence belongs to the RMR1 family.

The protein localises to the cytoplasm. It localises to the nucleus. Its function is as follows. Required for normal levels of gene conversion events during meiosis. The protein is Reduced meiotic recombination protein C1442.04c of Schizosaccharomyces pombe (strain 972 / ATCC 24843) (Fission yeast).